An 872-amino-acid polypeptide reads, in one-letter code: Translation initiation factor IF-2 (872 aa).

Positions 130–155 are enriched in basic and acidic residues; that stretch reads AEEEAARAAEEEAARLAEEEAARRAA. The interval 130–282 is disordered; sequence AEEEAARAAE…RERERLKHMQ (153 aa). Over residues 156–181 the composition is skewed to low complexity; sequence EPQSEPEAAAPAAEPVAPTAPVAAAP. Pro residues predominate over residues 182–194; it reads APAPATPVAPAQP. Over residues 195–211 the composition is skewed to low complexity; the sequence is KPVAAAAPAGDATAVPR. Over residues 271–282 the composition is skewed to basic and acidic residues; sequence RARERERLKHMQ. The tr-type G domain maps to 371-539; that stretch reads TRPPVVTVMG…AILLQAEILD (169 aa). Residues 380–387 form a G1 region; it reads GHVDHGKT. Position 380-387 (380-387) interacts with GTP; sequence GHVDHGKT. The tract at residues 405 to 409 is G2; the sequence is GITQH. The interval 427–430 is G3; the sequence is DTPG. GTP is bound by residues 427-431 and 481-484; these read DTPGH and NKID. The interval 481–484 is G4; it reads NKID. Residues 517–519 are G5; the sequence is SAK.

Belongs to the TRAFAC class translation factor GTPase superfamily. Classic translation factor GTPase family. IF-2 subfamily.

It is found in the cytoplasm. Its function is as follows. One of the essential components for the initiation of protein synthesis. Protects formylmethionyl-tRNA from spontaneous hydrolysis and promotes its binding to the 30S ribosomal subunits. Also involved in the hydrolysis of GTP during the formation of the 70S ribosomal complex. The chain is Translation initiation factor IF-2 from Paramagnetospirillum magneticum (strain ATCC 700264 / AMB-1) (Magnetospirillum magneticum).